A 521-amino-acid polypeptide reads, in one-letter code: Putative FNIP repeat-containing protein L162 (521 aa).

FNIP repeat units lie at residues 179–221 (FNKS…LGYK) and 222–263 (YNYP…MGGR).

The protein is Putative FNIP repeat-containing protein L162 of Acanthamoeba polyphaga mimivirus (APMV).